The chain runs to 157 residues: Eukaryotic translation initiation factor 5A-1 (157 aa).

S2 carries the N-acetylserine modification. The residue at position 2 (S2) is a Phosphoserine. Phosphothreonine is present on residues T7 and T10. Hypusine is present on K51. A Phosphoserine modification is found at S74. K86 is covalently cross-linked (Glycyl lysine isopeptide (Lys-Gly) (interchain with G-Cter in ubiquitin)).

The protein belongs to the eIF-5A family. In terms of assembly, homodimer. Binds to 80S ribosomes. Actively translating ribosomes show mutually exclusive binding of eIF5a (HYP2 or ANB1) and EFT1/eEF2. Interacts with DYS1 and LIA1. Post-translationally, lys-51 undergoes hypusination, a unique post-translational modification that consists in the addition of a butylamino group from spermidine to lysine side chain, leading to the formation of the unusual amino acid hypusine. eIF-5As are the only known proteins to undergo this modification, which is essential for their function.

It is found in the cytoplasm. Its function is as follows. Translation factor that promotes translation elongation and termination, particularly upon ribosome stalling at specific amino acid sequence contexts. Binds between the exit (E) and peptidyl (P) site of the ribosome and promotes rescue of stalled ribosome: specifically required for efficient translation of polyproline-containing peptides as well as other motifs that stall the ribosome. Acts as a ribosome quality control (RQC) cofactor by joining the RQC complex to facilitate peptidyl transfer during CAT tailing step. Involved in actin dynamics and cell cycle progression, mRNA decay and probably in a pathway involved in stress response and maintenance of cell wall integrity. This chain is Eukaryotic translation initiation factor 5A-1 (HYP2), found in Saccharomyces cerevisiae (strain ATCC 204508 / S288c) (Baker's yeast).